The chain runs to 270 residues: Protein FAM110D (270 aa).

The span at 1 to 16 shows a compositional bias: low complexity; it reads MLLASPSTPSRGRTPS. Disordered regions lie at residues 1-83, 117-142, and 186-244; these read MLLA…RPDS, RDVA…PQDA, and PQSW…QVSV. Residues 68 to 78 show a composition bias toward basic residues; that stretch reads RPARRGSGRRL.

It belongs to the FAM110 family.

This is Protein FAM110D (FAM110D) from Bos taurus (Bovine).